A 447-amino-acid polypeptide reads, in one-letter code: MPDRAQVIIRIVPGGGTKTLQQIINQLEYLSRKGRLELQRSARHLDIPLPPDQIHELARSWVQETGTYDESQPDEERQQELTTHIIVSFPAGTSQVAAYAASREWAAEMFGSGAGGGRYNYLTAFHIDRDHPHLHVVVNRRELLGHGWLKISRRHPQLNYDALRIKMAEISLRHGIALDASRRAERGITERPITYAQYRRLEREQARQIRFEDADLEQSSPQGDHPEFSQPFDTSPFEASAGGPEDMPRPNNRQNESQVHLQEPAGVSNEAGVLVRVALETERLAQPFVSETILADDIGSGSSRVAEGRVESANRTPDIPRAATEAATHTTHDRQRRAKRPHDDDGGPSGAKRVTLEGIAVGPQANAGEQDGSSGPLVRQAGTSRPSPPTATTRASTATDSLSATAHLQQRRGVLSKRPREDDDGEPSERKRERDERSKDGRGGNRR.

Disordered stretches follow at residues 214-265 (ADLE…QEPA) and 300-447 (SGSS…GNRR). Positions 251–260 (NNRQNESQVH) are enriched in polar residues. Residues 390–406 (TATTRASTATDSLSATA) show a composition bias toward low complexity. Basic and acidic residues predominate over residues 427-447 (PSERKRERDERSKDGRGGNRR).

Functionally, tumor formation by A.tumefaciens involves the transfer and integration of a defined segment (T-DNA) of Ti plasmid DNA into the plant nuclear genome. The virD operon encodes a site-specific endonuclease that cleaves at a unique site within both 24 bp direct repeats flanking the T-DNA. This Agrobacterium fabrum (strain C58 / ATCC 33970) (Agrobacterium tumefaciens (strain C58)) protein is T-DNA border endonuclease VirD2 (virD2).